The following is a 356-amino-acid chain: Heat-inducible transcription repressor HrcA (356 aa).

Belongs to the HrcA family.

In terms of biological role, negative regulator of class I heat shock genes (grpE-dnaK-dnaJ and groELS operons). Prevents heat-shock induction of these operons. This Brucella abortus (strain S19) protein is Heat-inducible transcription repressor HrcA.